The primary structure comprises 29 residues: Cytochrome b6-f complex subunit 8 (29 aa).

Residues 3 to 23 traverse the membrane as a helical segment; the sequence is LITITWASVMVAFTFSLSLVV.

It belongs to the PetN family. As to quaternary structure, the 4 large subunits of the cytochrome b6-f complex are cytochrome b6, subunit IV (17 kDa polypeptide, PetD), cytochrome f and the Rieske protein, while the 4 small subunits are PetG, PetL, PetM and PetN. The complex functions as a dimer.

Its subcellular location is the plastid. It is found in the chloroplast thylakoid membrane. Functionally, component of the cytochrome b6-f complex, which mediates electron transfer between photosystem II (PSII) and photosystem I (PSI), cyclic electron flow around PSI, and state transitions. This is Cytochrome b6-f complex subunit 8 from Chaetosphaeridium globosum (Charophycean green alga).